The chain runs to 202 residues: Nucleoside triphosphate pyrophosphatase (202 aa).

The active-site Proton acceptor is the Asp-79.

This sequence belongs to the Maf family. The cofactor is a divalent metal cation.

Its subcellular location is the cytoplasm. The catalysed reaction is a ribonucleoside 5'-triphosphate + H2O = a ribonucleoside 5'-phosphate + diphosphate + H(+). It carries out the reaction a 2'-deoxyribonucleoside 5'-triphosphate + H2O = a 2'-deoxyribonucleoside 5'-phosphate + diphosphate + H(+). Nucleoside triphosphate pyrophosphatase. May have a dual role in cell division arrest and in preventing the incorporation of modified nucleotides into cellular nucleic acids. The sequence is that of Nucleoside triphosphate pyrophosphatase from Rhodopseudomonas palustris (strain BisB18).